A 295-amino-acid polypeptide reads, in one-letter code: MTATIIDGKIISAELRARVAAEVTRIKADHGITPGLAVVLVGSDPASEVYVRSKHKQTQEAGMASFEHRLPADVPQAELLALIGQLNADPAVHGILVQLPLPKGLDSNAVIDAIDPAKDVDGLNPVNAGRLASGLFALTPCTPLGCIIMAKQVHASLEGMNAIVIGRSNLVGKPLVQLLLNENATVTIAHSRSRDLPALCRQADLVFAAVGRPEMVKGDWIKPGATVIDVGINRTPSPDGGKDKLVGDVAFAEAKDIAGAITPVPGGVGLMTVACLLVNTVRAASAIHGLPKPAV.

Residues 166-168 (GRS), S191, and I232 contribute to the NADP(+) site.

This sequence belongs to the tetrahydrofolate dehydrogenase/cyclohydrolase family. In terms of assembly, homodimer.

The catalysed reaction is (6R)-5,10-methylene-5,6,7,8-tetrahydrofolate + NADP(+) = (6R)-5,10-methenyltetrahydrofolate + NADPH. It catalyses the reaction (6R)-5,10-methenyltetrahydrofolate + H2O = (6R)-10-formyltetrahydrofolate + H(+). The protein operates within one-carbon metabolism; tetrahydrofolate interconversion. Catalyzes the oxidation of 5,10-methylenetetrahydrofolate to 5,10-methenyltetrahydrofolate and then the hydrolysis of 5,10-methenyltetrahydrofolate to 10-formyltetrahydrofolate. The chain is Bifunctional protein FolD from Rhodopseudomonas palustris (strain HaA2).